The following is a 213-amino-acid chain: Uridine kinase (213 aa).

13 to 20 contributes to the ATP binding site; that stretch reads GASASGKS.

The protein belongs to the uridine kinase family.

The protein localises to the cytoplasm. It catalyses the reaction uridine + ATP = UMP + ADP + H(+). The catalysed reaction is cytidine + ATP = CMP + ADP + H(+). It functions in the pathway pyrimidine metabolism; CTP biosynthesis via salvage pathway; CTP from cytidine: step 1/3. Its pathway is pyrimidine metabolism; UMP biosynthesis via salvage pathway; UMP from uridine: step 1/1. This is Uridine kinase from Haemophilus influenzae (strain PittEE).